The sequence spans 284 residues: Tropomyosin Per a 7.0102 (284 aa).

Positions 1-266 (MDAIKKKMQA…EDELVHEKEK (266 aa)) form a coiled coil.

It belongs to the tropomyosin family. As to quaternary structure, homodimer. In terms of tissue distribution, expressed in striated skeletal muscle (at protein level).

In terms of biological role, tropomyosin, in association with the troponin complex, plays a central role in the calcium dependent regulation of muscle contraction. The chain is Tropomyosin Per a 7.0102 from Periplaneta americana (American cockroach).